The primary structure comprises 882 residues: DNA polymerase 1 (882 aa).

Positions 1 to 31 are disordered; that stretch reads MTKQLTLFDIPSSKPAKSEQNTQQSQQSAPV. Residues 18–29 are compositionally biased toward polar residues; it reads SEQNTQQSQQSA.

Belongs to the DNA polymerase type-B family. As to quaternary structure, interacts with PCNA subunit PCNA2 and weakly with PCNA3.

The enzyme catalyses DNA(n) + a 2'-deoxyribonucleoside 5'-triphosphate = DNA(n+1) + diphosphate. Its activity is regulated as follows. DNA synthesis is stimulated by PCNA heterotrimers. Functionally, this polymerase possesses two enzymatic activities: DNA synthesis (polymerase) and an exonucleolytic activity that degrades single-stranded DNA in the 3'- to 5'-direction. DNA polymerase I, DNA ligase and the flap endonuclease may be constitutively associated with the PCNA heterotrimer forming a scanning complex able to couple DNA synthesis and Okazaki fragment maturation. The sequence is that of DNA polymerase 1 (dpo1) from Saccharolobus solfataricus (strain ATCC 35092 / DSM 1617 / JCM 11322 / P2) (Sulfolobus solfataricus).